A 236-amino-acid polypeptide reads, in one-letter code: Phosphoribosylaminoimidazole-succinocarboxamide synthase (236 aa).

The protein belongs to the SAICAR synthetase family.

It catalyses the reaction 5-amino-1-(5-phospho-D-ribosyl)imidazole-4-carboxylate + L-aspartate + ATP = (2S)-2-[5-amino-1-(5-phospho-beta-D-ribosyl)imidazole-4-carboxamido]succinate + ADP + phosphate + 2 H(+). It participates in purine metabolism; IMP biosynthesis via de novo pathway; 5-amino-1-(5-phospho-D-ribosyl)imidazole-4-carboxamide from 5-amino-1-(5-phospho-D-ribosyl)imidazole-4-carboxylate: step 1/2. The polypeptide is Phosphoribosylaminoimidazole-succinocarboxamide synthase (Chlorobium phaeobacteroides (strain BS1)).